Reading from the N-terminus, the 41-residue chain is Large ribosomal subunit protein bL36 (41 aa).

The protein belongs to the bacterial ribosomal protein bL36 family.

The chain is Large ribosomal subunit protein bL36 from Methylocella silvestris (strain DSM 15510 / CIP 108128 / LMG 27833 / NCIMB 13906 / BL2).